The primary structure comprises 173 residues: T-cell receptor beta-2 chain C region (173 aa).

Positions 1-146 (EDLRNVTPPK…GVLSATILYE (146 aa)) are c region. N-linked (GlcNAc...) asparagine glycosylation is found at N67 and N116. Residues 147–168 (ILLGKATLYAVLVSGLVLMAMV) form a helical membrane-spanning segment. Residues 169–173 (KKKNS) lie on the Cytoplasmic side of the membrane.

It is found in the membrane. The chain is T-cell receptor beta-2 chain C region from Mus musculus (Mouse).